The sequence spans 668 residues: Golgin subfamily A member 6-like protein 1 (668 aa).

Disordered stretches follow at residues 1-120 (MLMW…HQEA), 323-356 (IREQ…RQEE), 384-466 (EKMH…EMWR), 481-591 (KEKM…REQE), and 603-639 (EQEE…MRRQ). Residues 15–41 (LPTHPHLPTHPHLPTHPHLPTHPHLPT) are compositionally biased toward basic residues. Residues 51–72 (MSKETRQSKLAEAKEQLTDHHP) show a composition bias toward basic and acidic residues. 2 stretches are compositionally biased toward polar residues: residues 73–83 (QTNPSVGTAAS) and 91–103 (NNGT…TSGG). Basic and acidic residues predominate over residues 106 to 120 (SPEDEQKASHQHQEA). The stretch at 177–663 (LEQALSAVAT…EEKMQEHQEH (487 aa)) forms a coiled coil.

This sequence belongs to the GOLGA6 family.

In Homo sapiens (Human), this protein is Golgin subfamily A member 6-like protein 1 (GOLGA6L1).